Here is a 186-residue protein sequence, read N- to C-terminus: Cytochrome c oxidase subunit 4, mitochondrial (186 aa).

A mitochondrion-targeting transit peptide spans 1–31; that stretch reads MLLSRTAVAVARRATAAPALRRSIATTVVRC. The Zn(2+) site is built by Cys-118, His-126, Cys-142, and Cys-145.

It belongs to the cytochrome c oxidase subunit 5B family. In terms of assembly, component of the cytochrome c oxidase (complex IV, CIV), a multisubunit enzyme composed of 11 subunits. The complex is composed of a catalytic core of 3 subunits Cox1, Cox2 and Cox3, encoded in the mitochondrial DNA, and 8 supernumerary subunits Cox4, Cox5a/Cox5, Cox6, Cox7, Cox8, Cox7a/Cox9, Cox6b/Cox12 and Cox6a/Cox13, which are encoded in the nuclear genome. The complex exists as a monomer or a dimer and forms respiratory supercomplexes (SCs) in the inner mitochondrial membrane with NADH-ubiquinone oxidoreductase (complex I, CI) and ubiquinol-cytochrome c oxidoreductase (cytochrome b-c1 complex, complex III, CIII), resulting in various different assemblies (supercomplexes I(1)IV(1), I(1)III(3)IV(2), III(2)IV(1) and III(2)IV(2) as well as larger supercomplexes of compositions like I(1)III(2)IV(5-6)).

It is found in the mitochondrion inner membrane. It participates in energy metabolism; oxidative phosphorylation. Component of the cytochrome c oxidase, the last enzyme in the mitochondrial electron transport chain which drives oxidative phosphorylation. The respiratory chain contains 3 multisubunit complexes succinate dehydrogenase (complex II, CII), ubiquinol-cytochrome c oxidoreductase (cytochrome b-c1 complex, complex III, CIII) and cytochrome c oxidase (complex IV, CIV), that cooperate to transfer electrons derived from NADH and succinate to molecular oxygen, creating an electrochemical gradient over the inner membrane that drives transmembrane transport and the ATP synthase. Cytochrome c oxidase is the component of the respiratory chain that catalyzes the reduction of oxygen to water. Electrons originating from reduced cytochrome c in the intermembrane space (IMS) are transferred via the dinuclear copper A center (CU(A)) of Cox2 and heme A of Cox1 to the active site in Cox1, a binuclear center (BNC) formed by heme A3 and copper B (CU(B)). The BNC reduces molecular oxygen to 2 water molecules using 4 electrons from cytochrome c in the IMS and 4 protons from the mitochondrial matrix. This is Cytochrome c oxidase subunit 4, mitochondrial (cox-4) from Neurospora crassa (strain ATCC 24698 / 74-OR23-1A / CBS 708.71 / DSM 1257 / FGSC 987).